The sequence spans 605 residues: MNHFPKLLSSQIGFDVAQTMLENFDRHYRIFREAAVEAKTLYEHGDWHGLQRLARERITSYDDRVKECVEVLEDEYDAENIDDEVWQQIKLHYIGLLTSHRQPECAETFFNSVCCKILHRSYFSNDFIFVRPAISTEYLENDEPAAKPTYRAYYPGTDGLATTLERIVTNFQLEPAFDDLPRDIGCVMQAIHDEFGHFDEAPNFQIHVLSSLFFRNKSAYIVGRIINADRVLPFAVPIRHVRPGVLSLDTVLLRRDQLMIIFGFSHSYFLVDMGVPSAYVDFLCTIMPGKPKAEIYTSVGLQKQGKNLFYRDLLHHLSHSSDRFIIAPGIKGLVMLVFTLPSFPYVFKIIKDHFPPPKETTRAQIMEKYQLVKRHDRLGRMADTLEYSSVALPIARLDHALVRELEKEVPSLLEYEDGNLVIEHLYIERRMTPLNLYLQNGSDSDVEHGVKEYGNAVKELMKANIFPGDMLYKNFGVTRHGRVVFYDYDEIEYLTDCNVRRVPPPRNEEDELSGEPWYTVGPHDIFPETYGPFLLGDPRVRDVFMKHHADFFDPALWQASKDKLIQGELPDFYPYDTALRFCTRYPARFGATDQNDGAGDAQRAA.

ATP contacts are provided by residues 327 to 333 (APGIKGL) and Lys348. Asp383 is a catalytic residue.

The protein belongs to the AceK family.

Its subcellular location is the cytoplasm. It catalyses the reaction L-seryl-[isocitrate dehydrogenase] + ATP = O-phospho-L-seryl-[isocitrate dehydrogenase] + ADP + H(+). Its function is as follows. Bifunctional enzyme which can phosphorylate or dephosphorylate isocitrate dehydrogenase (IDH) on a specific serine residue. This is a regulatory mechanism which enables bacteria to bypass the Krebs cycle via the glyoxylate shunt in response to the source of carbon. When bacteria are grown on glucose, IDH is fully active and unphosphorylated, but when grown on acetate or ethanol, the activity of IDH declines drastically concomitant with its phosphorylation. In Burkholderia lata (strain ATCC 17760 / DSM 23089 / LMG 22485 / NCIMB 9086 / R18194 / 383), this protein is Isocitrate dehydrogenase kinase/phosphatase.